The following is a 162-amino-acid chain: Nucleotide-binding protein Adeh_0094 (162 aa).

The protein belongs to the YajQ family.

Nucleotide-binding protein. The chain is Nucleotide-binding protein Adeh_0094 from Anaeromyxobacter dehalogenans (strain 2CP-C).